A 382-amino-acid chain; its full sequence is 4-hydroxy-3-methylbut-2-en-1-yl diphosphate synthase (flavodoxin) (382 aa).

Residues Cys290, Cys293, Cys327, and Glu334 each contribute to the [4Fe-4S] cluster site.

It belongs to the IspG family. [4Fe-4S] cluster is required as a cofactor.

The catalysed reaction is (2E)-4-hydroxy-3-methylbut-2-enyl diphosphate + oxidized [flavodoxin] + H2O + 2 H(+) = 2-C-methyl-D-erythritol 2,4-cyclic diphosphate + reduced [flavodoxin]. Its pathway is isoprenoid biosynthesis; isopentenyl diphosphate biosynthesis via DXP pathway; isopentenyl diphosphate from 1-deoxy-D-xylulose 5-phosphate: step 5/6. Functionally, converts 2C-methyl-D-erythritol 2,4-cyclodiphosphate (ME-2,4cPP) into 1-hydroxy-2-methyl-2-(E)-butenyl 4-diphosphate. The sequence is that of 4-hydroxy-3-methylbut-2-en-1-yl diphosphate synthase (flavodoxin) from Rhodopirellula baltica (strain DSM 10527 / NCIMB 13988 / SH1).